The chain runs to 318 residues: uncharacterized protein (318 aa).

Residues Leu-67–Glu-157 adopt a coiled-coil conformation. Positions Glu-172–Leu-318 are disordered. 2 stretches are compositionally biased toward basic and acidic residues: residues Asn-175–Lys-193 and Lys-219–Ser-236. A compositionally biased stretch (polar residues) spans Val-237–Thr-248. Composition is skewed to basic and acidic residues over residues Ser-249 to Ala-274 and Ser-300 to Gly-310.

This is an uncharacterized protein from Staphylococcus aureus (strain Mu50 / ATCC 700699).